A 104-amino-acid polypeptide reads, in one-letter code: Pyrimidine/purine nucleoside phosphorylase (104 aa).

Belongs to the nucleoside phosphorylase PpnP family.

It carries out the reaction a purine D-ribonucleoside + phosphate = a purine nucleobase + alpha-D-ribose 1-phosphate. The catalysed reaction is adenosine + phosphate = alpha-D-ribose 1-phosphate + adenine. It catalyses the reaction cytidine + phosphate = cytosine + alpha-D-ribose 1-phosphate. The enzyme catalyses guanosine + phosphate = alpha-D-ribose 1-phosphate + guanine. It carries out the reaction inosine + phosphate = alpha-D-ribose 1-phosphate + hypoxanthine. The catalysed reaction is thymidine + phosphate = 2-deoxy-alpha-D-ribose 1-phosphate + thymine. It catalyses the reaction uridine + phosphate = alpha-D-ribose 1-phosphate + uracil. The enzyme catalyses xanthosine + phosphate = alpha-D-ribose 1-phosphate + xanthine. Its function is as follows. Catalyzes the phosphorolysis of diverse nucleosides, yielding D-ribose 1-phosphate and the respective free bases. Can use uridine, adenosine, guanosine, cytidine, thymidine, inosine and xanthosine as substrates. Also catalyzes the reverse reactions. This Geobacter metallireducens (strain ATCC 53774 / DSM 7210 / GS-15) protein is Pyrimidine/purine nucleoside phosphorylase.